Consider the following 500-residue polypeptide: E3 ubiquitin-protein ligase TRIM69 (500 aa).

The segment at 1 to 22 is disordered; the sequence is MEVSSRPPSNFDPGNYVEMSDP. Residues 1 to 153 form a necessary for nuclear localization region; it reads MEVSSRPPSN…SMGQSKDFLQ (153 aa). The RING-type zinc finger occupies 42-83; that stretch reads CPLCNDWFRDPLMLTCGHNFCQDCIQSFWKVHSKETFCPDCK. The stretch at 217 to 256 forms a coiled coil; that stretch reads NKEKDILNDLRDEGKLLNEEMEVNLNQIQEQCLVAKDMLA. The B30.2/SPRY domain occupies 306 to 500; that stretch reads PIQYIIWKEM…KEPLHIVHPQ (195 aa). At Ser-342 the chain carries Phosphoserine.

The protein belongs to the TRIM/RBCC family. In terms of assembly, homo-multimer; required for antiviral activity. Interacts with PML. Post-translationally, phosphorylated. Phosphorylation is necessary for nuclear localization. As to expression, expressed in spermatid.

It localises to the cytoplasm. The protein resides in the nucleus. Its subcellular location is the nucleus speckle. It is found in the cytoskeleton. The protein localises to the microtubule organizing center. It localises to the centrosome. The enzyme catalyses S-ubiquitinyl-[E2 ubiquitin-conjugating enzyme]-L-cysteine + [acceptor protein]-L-lysine = [E2 ubiquitin-conjugating enzyme]-L-cysteine + N(6)-ubiquitinyl-[acceptor protein]-L-lysine.. It participates in protein modification; protein ubiquitination. E3 ubiquitin ligase that plays an important role in antiviral immunity by restricting different viral infections including dengue virus or vesicular stomatitis indiana virus. Ubiquitinates viral proteins such as dengue virus NS3 thereby limiting infection. In addition, acts as a key mediator of type I interferon induced microtubule stabilization by directly associating to microtubules independently of its E3 ligase activity. Also plays a role in cataract formation together with TP53. Mechanistically, inhibits UVB-induced cell apoptosis and reactive oxygen species (ROS) production by inducing TP53 ubiquitination. Regulates centrosome dynamics and mitotic progression by ubiquitinating STK3/MST2; leading to its redistribution to the perinuclear cytoskeleton and subsequent phosphorylation by PLK1. The chain is E3 ubiquitin-protein ligase TRIM69 (Trim69) from Mus musculus (Mouse).